The following is a 496-amino-acid chain: E3 ubiquitin-protein ligase XIAP (496 aa).

3 BIR repeats span residues 26–93, 163–230, and 264–329; these read EFNR…CRFI, EEAR…CFFV, and YDAR…CKYL. Positions 299, 302, and 319 each coordinate Zn(2+). Lys321 participates in a covalent cross-link: Glycyl lysine isopeptide (Lys-Gly) (interchain with G-Cter in ubiquitin). Cys326 lines the Zn(2+) pocket. Lys327 is covalently cross-linked (Glycyl lysine isopeptide (Lys-Gly) (interchain with G-Cter in ubiquitin)). At Cys449 the chain carries S-nitrosocysteine. The RING-type zinc finger occupies 449–484; that stretch reads CKICMDRNIAIVFVPCGHLVTCKQCAEAVDKCPMCC.

This sequence belongs to the IAP family. In terms of assembly, monomer, and homodimer. Interacts (via BIR3 domain) with DIABLO/SMAC; the interaction inhibits apoptotic suppressor activity. Interacts with HTRA2/PRSS25; the interaction inhibits apoptotic suppressor activity. Interacts with TAB1/MAP3K7IP1 and AIFM1. Interaction with DIABLO/SMAC hinders binding of TAB1/MAP3K7IP1 and AIFM1. Interacts with TCF25 and COMMD1. Interacts (via BIR3 domain) with SEPTIN4. Interacts with RIP1, RIP2, RIP3, RIP4, CCS and USP19. Interacts (via BIR 2 domain and BIR 3 domain) with HAX1 (via C-terminus) and this interaction blocks ubiquitination of XIAP/BIRC4. Interacts with the monomeric form of BIRC5/survivin. Interacts with TLE3 and TCF7L2/TCF4. Interacts (via BIR 3 and RING domains) with PDCL3. Post-translationally, S-Nitrosylation down-regulates its E3 ubiquitin-protein ligase activity. In terms of processing, autoubiquitinated. Ubiquitinated by TRIM32; leading to proteasomal degradation.

The protein localises to the cytoplasm. Its subcellular location is the nucleus. The catalysed reaction is S-ubiquitinyl-[E2 ubiquitin-conjugating enzyme]-L-cysteine + [acceptor protein]-L-lysine = [E2 ubiquitin-conjugating enzyme]-L-cysteine + N(6)-ubiquitinyl-[acceptor protein]-L-lysine.. In terms of biological role, multi-functional protein which regulates not only caspases and apoptosis, but also modulates inflammatory signaling and immunity, copper homeostasis, mitogenic kinase signaling, cell proliferation, as well as cell invasion and metastasis. Acts as a direct caspase inhibitor. Directly bind to the active site pocket of CASP3 and CASP7 and obstructs substrate entry. Inactivates CASP9 by keeping it in a monomeric, inactive state. Acts as an E3 ubiquitin-protein ligase regulating NF-kappa-B signaling and the target proteins for its E3 ubiquitin-protein ligase activity include: RIPK1, RIPK2, MAP3K2/MEKK2, DIABLO/SMAC, AIFM1, CCS, PTEN and BIRC5/survivin. Acts as an important regulator of innate immunity by mediating 'Lys-63'-linked polyubiquitination of RIPK2 downstream of NOD1 and NOD2, thereby transforming RIPK2 into a scaffolding protein for downstream effectors, ultimately leading to activation of the NF-kappa-B and MAP kinases signaling. 'Lys-63'-linked polyubiquitination of RIPK2 also promotes recruitment of the LUBAC complex to RIPK2. Regulates the BMP signaling pathway and the SMAD and MAP3K7/TAK1 dependent pathways leading to NF-kappa-B and JNK activation. Ubiquitination of CCS leads to enhancement of its chaperone activity toward its physiologic target, SOD1, rather than proteasomal degradation. Ubiquitination of MAP3K2/MEKK2 and AIFM1 does not lead to proteasomal degradation. Plays a role in copper homeostasis by ubiquitinating COMMD1 and promoting its proteasomal degradation. Can also function as E3 ubiquitin-protein ligase of the NEDD8 conjugation pathway, targeting effector caspases for neddylation and inactivation. Ubiquitinates and therefore mediates the proteasomal degradation of BCL2 in response to apoptosis. Protects cells from spontaneous formation of the ripoptosome, a large multi-protein complex that has the capability to kill cancer cells in a caspase-dependent and caspase-independent manner. Suppresses ripoptosome formation by ubiquitinating RIPK1 and CASP8. Acts as a positive regulator of Wnt signaling and ubiquitinates TLE1, TLE2, TLE3, TLE4 and AES. Ubiquitination of TLE3 results in inhibition of its interaction with TCF7L2/TCF4 thereby allowing efficient recruitment and binding of the transcriptional coactivator beta-catenin to TCF7L2/TCF4 that is required to initiate a Wnt-specific transcriptional program. This is E3 ubiquitin-protein ligase XIAP (Xiap) from Rattus norvegicus (Rat).